The following is a 300-amino-acid chain: MCSTMTATMNQTICEKQNITMDLLRSPIQIPSASDTIKIETPSTISSQPSPIQTPLAAASSDNFERPSLSYKDLIIEAIDRSPEKRLKLNEIYQVIRLLHPYYRHRPDQWGWQNSIRHNLSLHDCFVKLPLKQTSASGVVGHFWTVVPELSDKQTLRRRNRQQPRALAKKSDAGRTLSRDDRGSSGSGETSPSPSQPSISPPNENPMPSVQALNVLELLSGMNDYKGTLFQNNYRTNLIQDNSAVNGLQNLLTTTLMQINPQLGALLSLANLNNLTTNQLQIASPSLSPIKAESQSFLLQ.

Residues 66–161 constitute a DNA-binding region (fork-head); that stretch reads RPSLSYKDLI…DKQTLRRRNR (96 aa). The tract at residues 153–208 is disordered; it reads KQTLRRRNRQQPRALAKKSDAGRTLSRDDRGSSGSGETSPSPSQPSISPPNENPMP. The segment covering 169–183 has biased composition (basic and acidic residues); that stretch reads KKSDAGRTLSRDDRG. Residues 187–198 show a composition bias toward low complexity; that stretch reads SGETSPSPSQPS.

As to expression, expressed in mechanosensory neurons.

Its subcellular location is the nucleus. Transcription factor. Binds to the regulatory elements of genes that contain the sequence motif 5'-TTGTTTCT-3'. Involved in regulating intestinal transcription of vitellogenin vit-2, acting in concert with transcription factors elt-2, mab-3 and daf-16, and also the TGF-beta/Sma/Mab pathway. Functions downstream of the insulin/IGF-1-like signaling (IIS) mediated pathway, in regeneration of axons after injury and in short-term memory, perhaps acting in neurons, and in modulation of longevity, perhaps acting non-neuronally. Plays a role in the modulation of endoplasmic reticulum (ER) homeostasis during chemical and pathogen stress, including exposure to the Gram-negative bacterium P.aeruginosa. The chain is Forkhead transcription factor fkh-9 from Caenorhabditis elegans.